Here is a 326-residue protein sequence, read N- to C-terminus: Microtubule-associated protein RP/EB family member 2 (326 aa).

A Phosphoserine modification is found at Ser9. One can recognise a Calponin-homology (CH) domain in the interval 56 to 158 (TMSRHDIIAW…FIQWFKKFYD (103 aa)). The residue at position 166 (Tyr166) is a Phosphotyrosine. 2 disordered regions span residues 170–239 (EARQ…DKDL) and 297–326 (YASD…QEEY). The DCTN1-binding stretch occupies residues 186–326 (QIFNLPKKSH…DQQPQQQEEY (141 aa)). The segment covering 199 to 233 (SPTAGAAKSSPAAKPGSTPSRPSSAKRASSSGSAS) has biased composition (low complexity). Ser218 and Ser235 each carry phosphoserine. One can recognise an EB1 C-terminal domain in the interval 235–305 (SDKDLETQVI…LYASDEQEGQ (71 aa)). The tract at residues 258 to 301 (EGVEKERDFYFGKLREIELLCQEHGQENDDLVQRLMEVLYASDE) is APC-binding. The segment covering 300-312 (DEQEGQTEEPEVE) has biased composition (acidic residues). Residues 317–326 (DQQPQQQEEY) are compositionally biased toward low complexity.

This sequence belongs to the MAPRE family. Interacts with DCTN1. Interacts with APC (via C-terminal). Interacts with monomeric and polymerized tubulin. Interacts with SLAIN1. Interacts (via the N-terminal region) with BAG1. Interacts with ASB14. Interacts with HAX1; this interaction is essential for epidermal cell migration. In terms of processing, phosphorylated at Ser-235 by CK2 leading to enhanced cell adhesion. Phosphorylated by CDK1 and AURKB during mitosis reduces the binding affinity of MAPRE2 for microtubules. Ubiquitinated in an ASB14-dependent manner; leading to proteasomal degradation.

The protein localises to the cytoplasm. It localises to the cytoskeleton. Functionally, adapter protein that is involved in microtubule polymerization, and spindle function by stabilizing microtubules and anchoring them at centrosomes. Therefore, ensures mitotic progression and genome stability. Acts as a central regulator of microtubule reorganization in apico-basal epithelial differentiation. Plays a role during oocyte meiosis by regulating microtubule dynamics. Participates in neurite growth by interacting with plexin B3/PLXNB3 and microtubule reorganization during apico-basal epithelial differentiation. Also plays an essential role for cell migration and focal adhesion dynamics. Mechanistically, recruits HAX1 to microtubules in order to regulate focal adhesion dynamics. This Rattus norvegicus (Rat) protein is Microtubule-associated protein RP/EB family member 2 (Mapre2).